The chain runs to 435 residues: Methylenetetrahydrofolate--tRNA-(uracil-5-)-methyltransferase TrmFO (435 aa).

G10–G15 lines the FAD pocket.

The protein belongs to the MnmG family. TrmFO subfamily. Requires FAD as cofactor.

The protein localises to the cytoplasm. It carries out the reaction uridine(54) in tRNA + (6R)-5,10-methylene-5,6,7,8-tetrahydrofolate + NADH + H(+) = 5-methyluridine(54) in tRNA + (6S)-5,6,7,8-tetrahydrofolate + NAD(+). It catalyses the reaction uridine(54) in tRNA + (6R)-5,10-methylene-5,6,7,8-tetrahydrofolate + NADPH + H(+) = 5-methyluridine(54) in tRNA + (6S)-5,6,7,8-tetrahydrofolate + NADP(+). Its function is as follows. Catalyzes the folate-dependent formation of 5-methyl-uridine at position 54 (M-5-U54) in all tRNAs. This is Methylenetetrahydrofolate--tRNA-(uracil-5-)-methyltransferase TrmFO from Halalkalibacterium halodurans (strain ATCC BAA-125 / DSM 18197 / FERM 7344 / JCM 9153 / C-125) (Bacillus halodurans).